Here is a 142-residue protein sequence, read N- to C-terminus: MAGIGPITQDWEPVVIRKKPANAAAKRDEKTVNAARRSGADIETVRKFNAGTNKAASSGTSLNTKMLDDDTENLTHERVPTELKKAIMQARTDKKLTQSQLAQIINEKPQVIQEYESGKAIPNQQILSKLERALGAKLRGKK.

Residues 51 to 64 (GTNKAASSGTSLNT) are compositionally biased toward polar residues. The disordered stretch occupies residues 51–77 (GTNKAASSGTSLNTKMLDDDTENLTHE). The region spanning 87-141 (IMQARTDKKLTQSQLAQIINEKPQVIQEYESGKAIPNQQILSKLERALGAKLRGK) is the HTH cro/C1-type domain. The segment at residues 98–117 (QSQLAQIINEKPQVIQEYES) is a DNA-binding region (H-T-H motif).

This sequence belongs to the MBF1 family. In terms of tissue distribution, expressed in leaves, roots, stems, flowers, siliques and shoots. Detected only in anthers and some seeds in siliques.

It localises to the nucleus. It is found in the nucleolus. Transcriptional coactivator that stimulates transcriptional activity by bridging regulatory proteins and TBP, thereby recruiting TBP to promoters occupied by DNA-binding regulators. The sequence is that of Multiprotein-bridging factor 1a (MBF1A) from Arabidopsis thaliana (Mouse-ear cress).